Reading from the N-terminus, the 345-residue chain is Prenyltransferase ltmC (345 aa).

Histidine 112 provides a ligand contact to substrate. Mg(2+)-binding residues include aspartate 119 and aspartate 123. Arginine 128 lines the substrate pocket. N-linked (GlcNAc...) asparagine glycosylation is present at asparagine 130. The substrate site is built by lysine 212, threonine 213, glutamine 243, asparagine 250, and lysine 260.

The protein belongs to the FPP/GGPP synthase family. Requires Mg(2+) as cofactor.

The protein operates within secondary metabolite biosynthesis. Functionally, prenyltransferase; part of the gene cluster that mediates the biosynthesis of lolitrems, indole-diterpene mycotoxins that are potent tremorgens in mammals, and are synthesized by clavicipitaceous fungal endophytes in association with their grass hosts. The geranylgeranyl diphosphate (GGPP) synthase ltmG is proposed to catalyze the first step in lolitrem biosynthesis. LtmG catalyzes a series of iterative condensations of isopentenyl diphosphate (IPP) with dimethylallyl diphosphate (DMAPP), geranyl diphosphate (GPP), and farnesyl diphosphate (FPP), to form GGPP. GGPP then condenses with indole-3-glycerol phosphate to form 3-geranylgeranylindole, an acyclic intermediate, to be incorporated into paxilline. Either ltmG or ltmC could be responsible for this step, as both are putative prenyl transferases. The FAD-dependent monooxygenase ltmM then catalyzes the epoxidation of the two terminal alkenes of the geranylgeranyl moiety, which is subsequently cyclized by ltmB, to paspaline. The cytochrome P450 monooxygenases ltmQ and ltmP can sequentially oxidize paspaline to terpendole E and terpendole F. Alternatively, ltmP converts paspaline to an intermediate which is oxidized by ltmQ to terpendole F. LtmF, ltmK, ltmE and ltmJ appear to be unique to the epichloe endophytes. The prenyltransferase ltmF is involved in the 27-hydroxyl-O-prenylation. The cytochrome P450 monooxygenase ltmK is required for the oxidative acetal ring formation. The multi-functional prenyltransferase ltmE is required for C20- and C21-prenylations of the indole ring of paspalanes and acts together with the cytochrome P450 monooxygenase ltmJ to yield lolitremanes by multiple oxidations and ring closures. The stereoisomer pairs of lolitriol and lolitrem N or lolitrem B and lolitrem F may be attributed to variations in the way in which ring closure can occur under the action of ltmJ. While the major product of this pathway is lolitrem B, the prenyl transferases and cytochrome P450 monooxygenases identified in this pathway have a remarkable versatility in their regio- and stereo-specificities to generate a diverse range of metabolites that are products of a metabolic grid rather than a linear pathway. The polypeptide is Prenyltransferase ltmC (Epichloe festucae var. lolii (Neotyphodium lolii)).